The primary structure comprises 293 residues: Triosephosphate isomerase (293 aa).

25 to 27 serves as a coordination point for substrate; that stretch reads NWK. Residue histidine 117 is the Electrophile of the active site. Glutamate 218 acts as the Proton acceptor in catalysis.

The protein belongs to the triosephosphate isomerase family. As to quaternary structure, homodimer.

The protein localises to the cytoplasm. The catalysed reaction is D-glyceraldehyde 3-phosphate = dihydroxyacetone phosphate. The protein operates within carbohydrate biosynthesis; gluconeogenesis. It participates in carbohydrate degradation; glycolysis; D-glyceraldehyde 3-phosphate from glycerone phosphate: step 1/1. Functionally, involved in the gluconeogenesis. Catalyzes stereospecifically the conversion of dihydroxyacetone phosphate (DHAP) to D-glyceraldehyde-3-phosphate (G3P). This Tropheryma whipplei (strain Twist) (Whipple's bacillus) protein is Triosephosphate isomerase.